A 144-amino-acid chain; its full sequence is Superoxide dismutase [Mn], mitochondrial (144 aa).

Mn(2+) contacts are provided by H10, H58, and D143.

This sequence belongs to the iron/manganese superoxide dismutase family. In terms of assembly, homotetramer. The cofactor is Mn(2+).

It is found in the mitochondrion matrix. It catalyses the reaction 2 superoxide + 2 H(+) = H2O2 + O2. Destroys superoxide anion radicals which are normally produced within the cells and which are toxic to biological systems. This is Superoxide dismutase [Mn], mitochondrial from Petromyzon marinus (Sea lamprey).